Consider the following 148-residue polypeptide: Troponin C (148 aa).

EF-hand domains are found at residues 8 to 43, 44 to 79, 81 to 116, and 117 to 148; these read KQFNDAHQAFKLHDKKDEGAVSNKELTNLFKSLALH, VSDDKLQQWVDEMDEDATGVIRWEKFKILFERKVQE, EDERELRSAFRVLDKNNQGVIDVEDLRWILKSLGDD, and LNDDEIQDMINETDTDGSGTVDYEEFSALMLG. D130, D132, S134, T136, and E141 together coordinate Ca(2+).

The protein belongs to the troponin C family.

Functionally, troponin is the central regulatory protein of striated muscle contraction. Tn consists of three components: Tn-I which is the inhibitor of actomyosin ATPase, Tn-T which contains the binding site for tropomyosin and Tn-C. The binding of calcium to Tn-C abolishes the inhibitory action of Tn on actin filaments. In Todarodes pacificus (Japanese flying squid), this protein is Troponin C.